The following is a 517-amino-acid chain: Enantioselective amidase (517 aa).

Residues Lys-96 and Ser-173 each act as charge relay system in the active site. The active-site Acyl-ester intermediate is the Ser-197.

It belongs to the amidase family. In terms of assembly, homooctamer.

It catalyses the reaction a monocarboxylic acid amide + H2O = a monocarboxylate + NH4(+). This is Enantioselective amidase (amdA) from Rhodococcus rhodochrous.